The primary structure comprises 205 residues: Photosystem I assembly protein Ycf4 (205 aa).

The next 2 membrane-spanning stretches (helical) occupy residues 23 to 43 (WATV…SSYI) and 86 to 106 (LMCF…CLIF).

It belongs to the Ycf4 family.

Its subcellular location is the plastid. It is found in the chloroplast thylakoid membrane. Functionally, seems to be required for the assembly of the photosystem I complex. This is Photosystem I assembly protein Ycf4 from Tetradesmus obliquus (Green alga).